The sequence spans 994 residues: Chloride channel protein 1 (994 aa).

Residues 1-118 lie on the Cytoplasmic side of the membrane; it reads MERSQSQQHG…VLRRKLGEDW (118 aa). Residues 37 to 61 form a disordered region; sequence SENGGLQHRPRKDLGPRHNAHPTQI. The chain crosses the membrane as a helical span at residues 119-150; the sequence is IFLVLLGLLMALVSWCMDYVSAKSLQAYKWTY. Residues 151 to 158 are Extracellular-facing; that stretch reads AQMQPSLP. The chain crosses the membrane as a helical span at residues 159 to 179; that stretch reads LQYLAWVTFPLILILFSALFC. Residues 180–183 lie on the Cytoplasmic side of the membrane; the sequence is QLIS. Positions 184-189 form an intramembrane region, note=Loop between two helices; sequence PQAVGS. The Selectivity filter part_1 motif lies at 188–192; it reads GSGIP. A chloride-binding site is contributed by S189. The helical intramembrane region spans 190–195; sequence GIPEMK. The Cytoplasmic portion of the chain corresponds to 196–208; sequence TILRGVVLKEYLT. The helical intramembrane region spans 209 to 224; that stretch reads LKAFVAKVVALTAGLG. The note=Loop between two helices intramembrane region spans 225 to 230; the sequence is SGIPVG. A Selectivity filter part_2 motif is present at residues 230–234; the sequence is GKEGP. The helical intramembrane region spans 231–246; sequence KEGPFVHIASICAAVL. Residues 247-268 lie on the Cytoplasmic side of the membrane; that stretch reads SKFMSMFSGVYEQPYYYTDILT. 2 intramembrane regions (helical) span residues 269 to 280 and 281 to 290; these read VGCAVGVGCCFG and TPLGGVLFSI. The Cytoplasmic segment spans residues 291-301; that stretch reads EVTSTYFAVRN. Residues 302 to 321 form a helical membrane-spanning segment; sequence YWRGFFAATFSAFVFRVLAV. Residues 322–347 are Extracellular-facing; that stretch reads WNKDAVTITALFRTNFRMDFPFDLKE. The chain crosses the membrane as a helical span at residues 348–376; that stretch reads LPAFAVIGICCGFLGAVFVYLHRQVMLGV. The Cytoplasmic segment spans residues 377-390; the sequence is RKHKALSQFLAKHR. Residues 391–408 form a helical membrane-spanning segment; that stretch reads LLYPGIVTFVIASLTFPP. Residues 409-414 are Extracellular-facing; it reads GMGQFM. Positions 415–418 form an intramembrane region, note=Loop between two helices; it reads AGEL. The segment at residues 419 to 426 is an intramembrane region (helical); it reads MPREAIST. The Extracellular segment spans residues 427–457; it reads LFDNNTWVKHIGDPKSLGQSAVWIHPQVNVV. Positions 458 to 475 form an intramembrane region, helical; that stretch reads IIILLFFVMKFWMSIVAT. An intramembrane region (note=Loop between two helices) is located at residues 476–482; that stretch reads TMPIPCG. A Selectivity filter part_3 motif is present at residues 482–486; it reads GGFMP. The helical intramembrane region spans 483-498; sequence GFMPVFVLGAAFGRLV. F484 provides a ligand contact to chloride. Residues 499 to 521 lie on the Extracellular side of the membrane; that stretch reads GEIMAMLFPEGILFDDIIYKILP. Residues 522 to 538 constitute an intramembrane region (helical); it reads GGYAVIGAAALTGAVSH. An intramembrane region (note=Loop between two helices) is located at residues 539 to 540; that stretch reads TV. Residues 541-554 constitute an intramembrane region (helical); that stretch reads STAVICFELTGQIA. Over 555–557 the chain is Extracellular; that stretch reads HIL. Residues 558–571 constitute an intramembrane region (helical); the sequence is PMMVAVILANMVAQ. Residues 572 to 575 constitute an intramembrane region (note=Loop between two helices); sequence SLQP. The helical intramembrane region spans 576–578; the sequence is SLY. A chloride-binding site is contributed by Y578. Over 579–994 the chain is Cytoplasmic; it reads DSIIQVKKLP…DEEDEDELIL (416 aa). In terms of domain architecture, CBS 1 spans 609 to 668; that stretch reads MVRDVKFVSASCTYGELRNLLQTTTVKTLPLVDSKDSMILLGSVERSELQSLLQRHLCAE. Disordered stretches follow at residues 710-769, 880-923, and 965-994; these read EDED…SADQ, TKSG…DGAP, and NLGP…ELIL. The span at 725–741 shows a compositional bias: pro residues; that stretch reads TPTPPPPPPPPLPPQFP. Positions 827-882 constitute a CBS 2 domain; it reads IDQSPFQLVEQTTLHKTHTLFSLLGLHLAYVTSMGKLRGVLALEELQKAIKGHTKS. At S892 the chain carries Phosphoserine. The span at 985-994 shows a compositional bias: acidic residues; the sequence is DEEDEDELIL.

This sequence belongs to the chloride channel (TC 2.A.49) family. ClC-1/CLCN1 subfamily. Homodimer. In terms of tissue distribution, predominantly expressed in skeletal muscles.

Its subcellular location is the cell membrane. The protein localises to the sarcolemma. It localises to the T-tubule. It carries out the reaction chloride(in) = chloride(out). The catalysed reaction is bromide(in) = bromide(out). The enzyme catalyses iodide(out) = iodide(in). It catalyses the reaction thiocyanate(in) = thiocyanate(out). It carries out the reaction nitrate(in) = nitrate(out). With respect to regulation, modulated by membrane voltage with depolarization favouring channel opening and hyperpolarization favouring channel closure. Inhibited by acidic pH and ATP binding due to a shift of voltage dependence of common gating to more positive voltages. Inhibited by 9-anthracene-carboxylic acid. Voltage-gated chloride channel involved in skeletal muscle excitability. Generates most of the plasma membrane chloride conductance in skeletal muscle fibers, stabilizes the resting membrane potential and contributes to the repolarization phase during action potential firing. Forms a homodimeric channel where each subunit has its own ion conduction pathway. Conducts double-barreled currents controlled by two types of gates, two fast glutamate gates that control each subunit independently and a slow common gate that opens and shuts off both subunits simultaneously. Has a significant open probability at muscle resting potential and is further activated upon membrane depolarization. Permeable to small monovalent anions with ion selectivity for chloride &gt; thiocyanate &gt; bromide &gt; nitrate &gt; iodide. This is Chloride channel protein 1 (Clcn1) from Rattus norvegicus (Rat).